The following is a 150-amino-acid chain: Endoribonuclease YbeY (150 aa).

The Zn(2+) site is built by H113, H117, and H123.

The protein belongs to the endoribonuclease YbeY family. Zn(2+) is required as a cofactor.

Its subcellular location is the cytoplasm. In terms of biological role, single strand-specific metallo-endoribonuclease involved in late-stage 70S ribosome quality control and in maturation of the 3' terminus of the 16S rRNA. This chain is Endoribonuclease YbeY, found in Malacoplasma penetrans (strain HF-2) (Mycoplasma penetrans).